A 490-amino-acid chain; its full sequence is Cytochrome P450 2C55 (490 aa).

Residue Cys435 coordinates heme.

This sequence belongs to the cytochrome P450 family. Requires heme as cofactor.

It localises to the endoplasmic reticulum membrane. The protein localises to the microsome membrane. The catalysed reaction is an organic molecule + reduced [NADPH--hemoprotein reductase] + O2 = an alcohol + oxidized [NADPH--hemoprotein reductase] + H2O + H(+). Its function is as follows. Metabolizes arachidonic acid mainly to 19-hydroxyeicosatetraenoic acid (HETE). This is Cytochrome P450 2C55 (Cyp2c55) from Rattus norvegicus (Rat).